We begin with the raw amino-acid sequence, 1135 residues long: Envelopment polyprotein (1135 aa).

A signal peptide spans 1–35; that stretch reads MRILKLLELVVKVSLFTIALSSVLLAFLTFRATDA. Residues 36 to 314 are Lumenal-facing; it reads KVEIIRGDHP…KYSKSIYKQT (279 aa). The Cell attachment site signature appears at 41-43; the sequence is RGD. The N-linked (GlcNAc...) asparagine; by host glycan is linked to Asn-116. An intrachain disulfide couples Cys-122 to Cys-156. Residues 177 to 195 form a non-covalent dimerization region; it reads LDNKRHFSVGTNFFIPESL. Asn-210 is a glycosylation site (N-linked (GlcNAc...) asparagine; by host). Residues Cys-224 and Cys-285 are joined by a disulfide bond. Residues 315-366 form a helical membrane-spanning segment; the sequence is ACINFSWIRLILIALLIYFPIRWLVNKTTKPLFLWYDLMGLITYPVLLLINC. At 367 to 484 the chain is on the cytoplasmic side; the sequence is LWKYFPFKCS…VPGCPFLVTS (118 aa). The interval 437–484 is signal for signal peptide peptidase; the sequence is LSLSLLKFVTEILIGLVILSQIPMSMAQTTQCLSGCFYVPGCPFLVTS. Over 485–1067 the chain is Lumenal; that stretch reads KFEKCPEKDQ…YFGSFFDTIR (583 aa). N-linked (GlcNAc...) asparagine; by host glycosylation is found at Asn-588, Asn-605, and Asn-980. The chain crosses the membrane as a helical span at residues 1068–1088; that stretch reads VVLLIAFIFLVIYFCSILTSI. The Cytoplasmic portion of the chain corresponds to 1089–1135; it reads CKGYVKHKSYKSRSKIEDDDEPEIKAPMLMKDTMTRRRPPMDFSHLV.

This sequence belongs to the tospovirus envelope glycoprotein family. In terms of assembly, homodimer; disulfide-linked. Heterodimer with Glycoprotein C. Interacts with nucleoprotein. Heterodimer with Glycoprotein N. Interacts with nucleoprotein. Post-translationally, specific enzymatic cleavages in vivo yield mature proteins including Glycoprotein N and Glycoprotein C. In terms of processing, glycosylated with O-linked glycans. Glycosylation is essential for proper subcellular location. Cleaved at acidic pH.

Its subcellular location is the virion membrane. The protein resides in the host Golgi apparatus membrane. It is found in the host endoplasmic reticulum membrane. Functionally, forms the spikes present at the surface of the virion together with Glycoprotein C. They are able to attach the virion to a cell receptor and to promote fusion of membranes after endocytosis of the virion. Plays a role in virus binding and/or entry into the vector midgut. In terms of biological role, forms the spikes present at the surface of the virion together with Glycoprotein N. They are able to attach the virion to a cell receptor and to promote fusion of membranes after endocytosis of the virion. Probable class II fusion protein. The polypeptide is Envelopment polyprotein (GP) (Frankliniella occidentalis (Western flower thrips)).